The primary structure comprises 300 residues: Protein orai (300 aa).

Topologically, residues 1 to 128 (MPRSHDPSRV…SKAQLKASSR (128 aa)) are cytoplasmic. The tract at residues 58–82 (QPPSSGGGSRNVGGGDGAAGNSKNG) is disordered. Positions 62–75 (SGGGSRNVGGGDGA) are enriched in gly residues. The helical transmembrane segment at 129–146 (TSALLAGFAMVCLVELQY) threads the bilayer. The Extracellular portion of the chain corresponds to 147–153 (DDSTSKP). A helical transmembrane segment spans residues 154–174 (LLIVLGVVTSLLVSVHLLALM). Residues 175-205 (MSTCILPYMEATGCTQDSPHLKLKFYIDLSW) lie on the Cytoplasmic side of the membrane. The chain crosses the membrane as a helical span at residues 206–226 (LFSTCIGLLLFLVEIGVIFYV). Residues 227-237 (KFTAVGYPTAG) lie on the Extracellular side of the membrane. The helical transmembrane segment at 238 to 258 (YITTAMLIPVGIVFVLFSYLI) threads the bilayer. Residues 259-300 (HKNRVSHSLGRFKDKVDTMKQFLDVEANLQKSTIAPSTIRDI) lie on the Cytoplasmic side of the membrane.

Belongs to the Orai family.

The protein resides in the membrane. Functionally, ca(2+) release-activated Ca(2+)-like (CRAC-like) channel subunit which mediates Ca(2+) influx and increase in Ca(2+)-selective current by synergy with the Ca(2+) sensor, stim-1. Required for Ca(2+) and IP3-dependent contractile activity of sheath cells and the spermatheca. Affects brood size and somatic cell function. This is Protein orai (orai-1) from Caenorhabditis briggsae.